Consider the following 203-residue polypeptide: Endo-type membrane-bound lytic murein transglycosylase A (203 aa).

Residues 1–15 (MKLRWLLILVVFLAG) form the signal peptide. Residue cysteine 16 is the site of N-palmitoyl cysteine attachment. Cysteine 16 carries S-diacylglycerol cysteine lipidation.

It belongs to the transglycosylase Slt family.

The protein localises to the cell outer membrane. The enzyme catalyses Endolytic cleavage of the (1-&gt;4)-beta-glycosidic linkage between N-acetylmuramic acid (MurNAc) and N-acetylglucosamine (GlcNAc) residues in peptidoglycan with concomitant formation of a 1,6-anhydrobond in the MurNAc residue.. Its function is as follows. Murein-degrading enzyme. May play a role in recycling of muropeptides during cell elongation and/or cell division. Preferentially cleaves at a distance of more than two disaccharide units from the ends of the glycan chain. This is Endo-type membrane-bound lytic murein transglycosylase A from Klebsiella pneumoniae (strain 342).